The chain runs to 916 residues: Probable dipeptidyl-aminopeptidase B (916 aa).

Disordered stretches follow at residues 1-35 (MGRTGDLENAEFFPMTRRRSTSGTSSRSSTDSGLS) and 67-86 (DAEADVDEPFLPTSSKKLGS). Residues 1–92 (MGRTGDLENA…KLGSGSRTRQ (92 aa)) are Cytoplasmic-facing. Over residues 21–35 (TSGTSSRSSTDSGLS) the composition is skewed to low complexity. Residues 93–113 (IFWALVILCLGGWVLALVLFL) traverse the membrane as a helical; Signal-anchor for type II membrane protein segment. Topologically, residues 114 to 916 (THGRASSQTA…VKRSVPAFAH (803 aa)) are vacuolar. Residues Asn349 and Asn640 are each glycosylated (N-linked (GlcNAc...) asparagine). Ser754 acts as the Charge relay system in catalysis. Asn808 and Asn813 each carry an N-linked (GlcNAc...) asparagine glycan. Residues Asp831 and His864 each act as charge relay system in the active site.

It belongs to the peptidase S9B family.

The protein resides in the vacuole membrane. The catalysed reaction is Release of an N-terminal dipeptide, Xaa-Yaa-|-Zaa-, from a polypeptide, preferentially when Yaa is Pro, provided Zaa is neither Pro nor hydroxyproline.. In terms of biological role, type IV dipeptidyl-peptidase which removes N-terminal dipeptides sequentially from polypeptides having unsubstituted N-termini provided that the penultimate residue is proline. The chain is Probable dipeptidyl-aminopeptidase B (dapB) from Aspergillus flavus (strain ATCC 200026 / FGSC A1120 / IAM 13836 / NRRL 3357 / JCM 12722 / SRRC 167).